Consider the following 897-residue polypeptide: MQTHEIRKRFLDHFVKAGHTEVPSASVILDDPNLLFVNAGMVQFVPFFLGQRTPPYQRATSIQKCIRTPDIDEVGITTRHNTFFQMAGNFSFGDYFKKGAIEFAWTLLTNPVDQGGYGFDPEKLWATVYLDDDEAIQLWQEVAGLPLERIQRRGMADNYWSMGIPGPCGPSSEIYVDRGPEYGIEGGPEANEDRYIEIWNLVFMQNERGEGTGKSDFEILGPLPRKNIDTGMGIERVACLLQGVDNVYETDLLRPVIDAVAARAPRGYGRGSHSDDVRYRIIADHSRTAAILIGDGVSPGNDGRGYVLRRLLRRVIRSAKLLGIDDAVVGDLMATVRDAMGPSYPELVTDFDRIQRIAVAEETAFNRTLSSGSRLFEEAAQSTKAAGADRLSGRDAFTLHDTYGFPIELTLEMAAEADLAVDEEGFRSLMAEQRQRAKADAAARKQAHTDLTAYRELVDAHPTQFTGFDELTTEARILGIFVDGRRVPVVGHDTATAQHRIELVLDRSPFYAESGGQIADEGTITGTGASQTAKAAVSDVQKIAKTLWVHRVTVESGEFVEGDTVTAAVDPRWRHGATQGHSGTHMVHAALRQVLGPNAVQAGSLNRPGYLRFDFNWQGALTDDQRTQIEEVTNEAVEADFEVHSFTTELEKAKSMGAMALFGEAYPDEVRVVEIGGPFSLELCGGTHVRSSAQIGPVTILGESSVGSGVRRVEAYVGLDSFRHLAKERALMAGLASSLKVPSEEVPARVAGLVERLKAAEKELDRMRLANARAAAVNAVAGAERVGKVRLVAQRMAGGMSAGDLRTLVGDIRGKLGGDPAVVALIAEGDNDTVPFVVAVNPAAQDLGLRANELVKQFGAAVNGRGGGKADLAQGSGKGAAGIDAALAALRAEIDRS.

Residues His-581, His-585, Cys-684, and His-688 each contribute to the Zn(2+) site.

The protein belongs to the class-II aminoacyl-tRNA synthetase family. Requires Zn(2+) as cofactor.

The protein resides in the cytoplasm. It catalyses the reaction tRNA(Ala) + L-alanine + ATP = L-alanyl-tRNA(Ala) + AMP + diphosphate. Its function is as follows. Catalyzes the attachment of alanine to tRNA(Ala) in a two-step reaction: alanine is first activated by ATP to form Ala-AMP and then transferred to the acceptor end of tRNA(Ala). Also edits incorrectly charged Ser-tRNA(Ala) and Gly-tRNA(Ala) via its editing domain. In Mycobacterium sp. (strain KMS), this protein is Alanine--tRNA ligase.